The primary structure comprises 25 residues: uncharacterized protein (25 aa).

This is an uncharacterized protein from Escherichia coli (Bacteriophage T3).